The primary structure comprises 971 residues: MVGSGSHTPYDISNSPSDVNVQPATQLNSTLVEDDDVDNQLFEEAQVTETGFRSPSASDNSCAYCGIDSAKCVIKCNSCKKWFCNTKNGTSSSHIVNHLVLSHHNVVSLHPDSDLGDTVLECYNCGRKNVFLLGFVSAKSEAVVVLLCRIPCAQTKNANWDTDQWQPLIEDRQLLSWVAEQPTEEEKLKARLITPSQISKLEAKWRSNKDATINDIDAPEEQEAIPPLLLRYQDAYEYQRSYGPLIKLEADYDKQLKESQALEHISVSWSLALNNRHLASFTLSTFESNELKVAIGDEMILWYSGMQHPDWEGRGYIVRLPNSFQDTFTLELKPSKTPPPTHLTTGFTAEFIWKGTSYDRMQDALKKFAIDKKSISGYLYYKILGHQVVDISFDVPLPKEFSIPNFAQLNSSQSNAVSHVLQRPLSLIQGPPGTGKTVTSATIVYHLSKIHKDRILVCAPSNVAVDHLAAKLRDLGLKVVRLTAKSREDVESSVSNLALHNLVGRGAKGELKNLLKLKDEVGELSASDTKRFVKLVRKTEAEILNKADVVCCTCVGAGDKRLDTKFRTVLIDESTQASEPECLIPIVKGAKQVILVGDHQQLGPVILERKAADAGLKQSLFERLISLGHVPIRLEVQYRMNPYLSEFPSNMFYEGSLQNGVTIEQRTVPNSKFPWPIRGIPMMFWANYGREEISANGTSFLNRIEAMNCERIITKLFRDGVKPEQIGVITPYEGQRAYILQYMQMNGSLDKDLYIKVEVASVDAFQGREKDYIILSCVRANEQQAIGFLRDPRRLNVGLTRAKYGLVILGNPRSLARNTLWNHLLIHFREKGCLVEGTLDNLQLCTVQLVRPQPRKTERPMNAQFNVESEMGDFPKFQDFDAQSMVSFSGQIGDFGNAFVDNTELSSYINNEYWNFENFKSAFSQKQNRNEIDDRNLYQEEASHLNSNFARELQREEQKHELSKDFSNLGI.

Residues 1–22 (MVGSGSHTPYDISNSPSDVNVQ) are disordered. The Upf1 CH-rich domain occupies 54 to 208 (SPSASDNSCA…SKLEAKWRSN (155 aa)). The residue at position 56 (Ser56) is a Phosphoserine. Residues Cys62, Cys65, Cys76, Cys79, Cys84, His94, His98, His104, Cys122, Cys125, Cys148, and Cys152 each coordinate Zn(2+). Residues 62–94 (CAYCGIDSAKCVIKCNSCKKWFCNTKNGTSSSH) are C3H. Residues 76-104 (CNSCKKWFCNTKNGTSSSHIVNHLVLSHH) are CC/SHH/C. The interval 122-152 (CYNCGRKNVFLLGFVSAKSEAVVVLLCRIPC) is C4. ATP is bound by residues Gln413, 433–437 (GTGKT), Gln601, Tyr638, and Glu769. Ser869 is subject to Phosphoserine.

Belongs to the DNA2/NAM7 helicase family.

It localises to the cytoplasm. It carries out the reaction ATP + H2O = ADP + phosphate + H(+). In terms of biological role, RNA-dependent helicase required for nonsense-mediated decay (NMD) of aberrant mRNAs containing premature stop codons and modulates the expression level of normal mRNAs. Also capable of unwinding double-stranded DNA and translocating on single-stranded DNA. This is ATP-dependent helicase NAM7 (NAM7) from Saccharomyces cerevisiae (strain ATCC 204508 / S288c) (Baker's yeast).